The primary structure comprises 98 residues: NADH-ubiquinone oxidoreductase chain 4L (98 aa).

Helical transmembrane passes span 1 to 21, 28 to 48, and 59 to 79; these read MTSI…GVLI, STLL…ALLI, and APLI…ALLV.

This sequence belongs to the complex I subunit 4L family. As to quaternary structure, core subunit of respiratory chain NADH dehydrogenase (Complex I) which is composed of 45 different subunits.

The protein resides in the mitochondrion inner membrane. The enzyme catalyses a ubiquinone + NADH + 5 H(+)(in) = a ubiquinol + NAD(+) + 4 H(+)(out). Functionally, core subunit of the mitochondrial membrane respiratory chain NADH dehydrogenase (Complex I) which catalyzes electron transfer from NADH through the respiratory chain, using ubiquinone as an electron acceptor. Part of the enzyme membrane arm which is embedded in the lipid bilayer and involved in proton translocation. In Vombatus ursinus (Common wombat), this protein is NADH-ubiquinone oxidoreductase chain 4L (MT-ND4L).